A 225-amino-acid chain; its full sequence is 2-C-methyl-D-erythritol 4-phosphate cytidylyltransferase (225 aa).

This sequence belongs to the IspD/TarI cytidylyltransferase family. IspD subfamily.

It carries out the reaction 2-C-methyl-D-erythritol 4-phosphate + CTP + H(+) = 4-CDP-2-C-methyl-D-erythritol + diphosphate. It participates in isoprenoid biosynthesis; isopentenyl diphosphate biosynthesis via DXP pathway; isopentenyl diphosphate from 1-deoxy-D-xylulose 5-phosphate: step 2/6. Functionally, catalyzes the formation of 4-diphosphocytidyl-2-C-methyl-D-erythritol from CTP and 2-C-methyl-D-erythritol 4-phosphate (MEP). This Clostridium perfringens (strain ATCC 13124 / DSM 756 / JCM 1290 / NCIMB 6125 / NCTC 8237 / Type A) protein is 2-C-methyl-D-erythritol 4-phosphate cytidylyltransferase.